The primary structure comprises 33 residues: Protamine-2C (33 aa).

A disordered region spans residues 1 to 33 (MPRRRRSSRRPVRRRRRPRVSRRRRRRGGRRRR).

Testis.

The protein resides in the nucleus. Its subcellular location is the chromosome. Its function is as follows. Protamines substitute for histones in the chromatin of sperm during the haploid phase of spermatogenesis. They compact sperm DNA into a highly condensed, stable and inactive complex. In Oncorhynchus mykiss (Rainbow trout), this protein is Protamine-2C.